The chain runs to 349 residues: Isopentenyl-diphosphate delta-isomerase (349 aa).

9–10 contributes to the substrate binding site; it reads RK. FMN contacts are provided by residues 65–67, Ser95, and Asn124; that span reads AMT. 95-97 is a substrate binding site; that stretch reads STH. Gln154 serves as a coordination point for substrate. Position 155 (Glu155) interacts with Mg(2+). FMN is bound by residues Lys186, Ser211, Thr216, 262 to 264, and 283 to 284; these read GLR and SR.

Belongs to the IPP isomerase type 2 family. Homooctamer. Dimer of tetramers. It depends on FMN as a cofactor. Requires NADPH as cofactor. The cofactor is Mg(2+).

Its subcellular location is the cytoplasm. It catalyses the reaction isopentenyl diphosphate = dimethylallyl diphosphate. In terms of biological role, involved in the biosynthesis of isoprenoids. Catalyzes the 1,3-allylic rearrangement of the homoallylic substrate isopentenyl (IPP) to its allylic isomer, dimethylallyl diphosphate (DMAPP). The chain is Isopentenyl-diphosphate delta-isomerase from Staphylococcus aureus (strain MSSA476).